The sequence spans 249 residues: uncharacterized protein (249 aa).

This sequence belongs to the chlamydial CPn_0206/CT203/TC_0475 family.

This is an uncharacterized protein from Chlamydia muridarum (strain MoPn / Nigg).